A 419-amino-acid polypeptide reads, in one-letter code: GTPase Obg (419 aa).

An Obg domain is found at 1-156; the sequence is MRFVDYVSIE…FYLDLQLKVM (156 aa). Residues 157–334 enclose the OBG-type G domain; the sequence is ADIGLVGKPN…LGENQKKLEI (178 aa). Residues 163-170, 188-192, 209-212, 278-281, and 315-317 contribute to the GTP site; these read GKPNAGKS, FTTLV, DLPG, NKCD, and NII. Positions 170 and 190 each coordinate Mg(2+). An OCT domain is found at 342–419; the sequence is IEFNLKAPFL…RIYEFEFHWN (78 aa).

The protein belongs to the TRAFAC class OBG-HflX-like GTPase superfamily. OBG GTPase family. Monomer. Mg(2+) serves as cofactor.

The protein resides in the cytoplasm. An essential GTPase which binds GTP, GDP and possibly (p)ppGpp with moderate affinity, with high nucleotide exchange rates and a fairly low GTP hydrolysis rate. Plays a role in control of the cell cycle, stress response, ribosome biogenesis and in those bacteria that undergo differentiation, in morphogenesis control. The chain is GTPase Obg from Mesomycoplasma hyopneumoniae (strain 7448) (Mycoplasma hyopneumoniae).